A 336-amino-acid chain; its full sequence is Tyrosine recombinase XerC (336 aa).

In terms of domain architecture, Core-binding (CB) spans 14–106 (VARCRWLEPF…SVKSFYRFLL (93 aa)). The region spanning 127-330 (KVPRFVSEEE…TFSRLKEIYD (204 aa)) is the Tyr recombinase domain. Residues Arg-183, Lys-207, His-282, Arg-285, and His-308 contribute to the active site. Tyr-317 functions as the O-(3'-phospho-DNA)-tyrosine intermediate in the catalytic mechanism.

This sequence belongs to the 'phage' integrase family. XerC subfamily. In terms of assembly, forms a cyclic heterotetrameric complex composed of two molecules of XerC and two molecules of XerD.

The protein resides in the cytoplasm. In terms of biological role, site-specific tyrosine recombinase, which acts by catalyzing the cutting and rejoining of the recombining DNA molecules. The XerC-XerD complex is essential to convert dimers of the bacterial chromosome into monomers to permit their segregation at cell division. It also contributes to the segregational stability of plasmids. The protein is Tyrosine recombinase XerC of Chlorobaculum parvum (strain DSM 263 / NCIMB 8327) (Chlorobium vibrioforme subsp. thiosulfatophilum).